A 203-amino-acid polypeptide reads, in one-letter code: A-type ATP synthase subunit E (203 aa).

Belongs to the V-ATPase E subunit family. In terms of assembly, has multiple subunits with at least A(3), B(3), C, D, E, F, H, I and proteolipid K(x).

The protein resides in the cell membrane. Functionally, component of the A-type ATP synthase that produces ATP from ADP in the presence of a proton gradient across the membrane. This is A-type ATP synthase subunit E from Methanococcus maripaludis (strain DSM 14266 / JCM 13030 / NBRC 101832 / S2 / LL).